Here is a 534-residue protein sequence, read N- to C-terminus: Protein tweety homolog 2 (534 aa).

At 1-44 the chain is on the extracellular side; sequence MQAARVDYIAPWWVVWLHSVPHVGLRLQPVNSTFSPGDESYQES. An N-linked (GlcNAc...) asparagine glycan is attached at Asn31. Residues 45–65 traverse the membrane as a helical segment; the sequence is LLFLGLVAAVCLGLNLIFLVA. At 66–87 the chain is on the cytoplasmic side; that stretch reads YLVCACHCRRDDAVQTKQHHSC. Residues 88-108 traverse the membrane as a helical segment; that stretch reads CITWTAVVAGLICCAAVGVGF. Residues 109-213 lie on the Extracellular side of the membrane; the sequence is YGNSETNDGA…QTGYVEYYRW (105 aa). Residues Glu113 and Asp116 each contribute to the Ca(2+) site. Residue Asn129 is glycosylated (N-linked (GlcNAc) asparagine). The RGD motif lies at 164 to 166; it reads RGD. A Phosphothreonine modification is found at Thr199. Residues 214-234 form a helical membrane-spanning segment; the sequence is LSYLLLFILDLVICLIACLGL. The Cytoplasmic segment spans residues 235–240; that stretch reads AKRSKC. Residues 241 to 261 form a helical membrane-spanning segment; the sequence is LLASMLCCGALSLLLSWASLA. Over 262–388 the chain is Extracellular; the sequence is ADGSAAVATS…AGICYDGLQG (127 aa). Cystine bridges form between Cys274–Cys382 and Cys300–Cys367. N-linked (GlcNAc...) asparagine glycosylation occurs at Asn283. An N-linked (GlcNAc) asparagine glycan is attached at Asn352. Residues 389–409 traverse the membrane as a helical segment; sequence LLYLGLFSFLAALAFSTMICA. Residues 410–534 are Cytoplasmic-facing; that stretch reads GPRAWKHFTT…LRHYGNQFPA (125 aa). At Ser504 the chain carries Phosphoserine. A PY-motif; mediates interaction with NEDD4L motif is present at residues 506–509; it reads PPTY.

This sequence belongs to the tweety family. Homodimer. Forms cis-homodimers in the presence of Ca(+2) and forms monomers and trans-dimers in the absence of Ca(2+). Interacts with NEDD4L. N- Glycosylated. Contains high-mannose, hybrid and complex oligosaccharides. Post-translationally, ubiquitinated by NEDD4L, leading to its proteasomal degradation. In terms of tissue distribution, expressed at higher level in brain and testis and at lower levels in heart, ovary, spleen and peripheral blood leukocytes. Up-regulated in 13 of 16 renal cell carcinoma samples examined. Up-regulated in colon carcinoma.

It localises to the cell membrane. The enzyme catalyses chloride(in) = chloride(out). The catalysed reaction is L-glutamate(out) = L-glutamate(in). In terms of biological role, calcium-independent, swelling-dependent volume-regulated anion channel (VRAC-swell) which plays a pivotal role in the process of regulatory volume decrease (RVD) in the brain through the efflux of anions like chloride and organic osmolytes like glutamate. Probable large-conductance Ca(2+)-activated chloride channel. In Homo sapiens (Human), this protein is Protein tweety homolog 2 (TTYH2).